Reading from the N-terminus, the 227-residue chain is LexA repressor (227 aa).

Positions 25 to 45 (FDEMKDALDLRSKSGIHRLIT) form a DNA-binding region, H-T-H motif. Active-site for autocatalytic cleavage activity residues include Ser148 and Lys186.

Belongs to the peptidase S24 family. Homodimer.

It catalyses the reaction Hydrolysis of Ala-|-Gly bond in repressor LexA.. In terms of biological role, represses a number of genes involved in the response to DNA damage (SOS response), including recA and lexA. In the presence of single-stranded DNA, RecA interacts with LexA causing an autocatalytic cleavage which disrupts the DNA-binding part of LexA, leading to derepression of the SOS regulon and eventually DNA repair. The chain is LexA repressor from Cereibacter sphaeroides (strain ATCC 17029 / ATH 2.4.9) (Rhodobacter sphaeroides).